The chain runs to 377 residues: Citrate synthase (377 aa).

Active-site residues include histidine 258 and aspartate 313.

This sequence belongs to the citrate synthase family. Homodimer. In terms of processing, the N-terminus is blocked by acetylation.

The catalysed reaction is oxaloacetate + acetyl-CoA + H2O = citrate + CoA + H(+). Its pathway is carbohydrate metabolism; tricarboxylic acid cycle; isocitrate from oxaloacetate: step 1/2. Its activity is regulated as follows. Allosterically inhibited by NADH. This chain is Citrate synthase (gltA), found in Saccharolobus solfataricus (strain ATCC 35092 / DSM 1617 / JCM 11322 / P2) (Sulfolobus solfataricus).